A 157-amino-acid polypeptide reads, in one-letter code: Endoribonuclease YbeY (157 aa).

Residues H113, H117, and H123 each coordinate Zn(2+).

It belongs to the endoribonuclease YbeY family. Requires Zn(2+) as cofactor.

It localises to the cytoplasm. Single strand-specific metallo-endoribonuclease involved in late-stage 70S ribosome quality control and in maturation of the 3' terminus of the 16S rRNA. This is Endoribonuclease YbeY from Ehrlichia ruminantium (strain Gardel).